The primary structure comprises 436 residues: Adenosylmethionine-8-amino-7-oxononanoate aminotransferase (436 aa).

Residue tryptophan 56 participates in substrate binding. 114-115 is a binding site for pyridoxal 5'-phosphate; it reads GS. Tyrosine 148 serves as a coordination point for substrate. Pyridoxal 5'-phosphate is bound at residue aspartate 245. Substrate-binding residues include lysine 274, serine 309, and arginine 400. Residue lysine 274 is modified to N6-(pyridoxal phosphate)lysine.

The protein belongs to the class-III pyridoxal-phosphate-dependent aminotransferase family. BioA subfamily. As to quaternary structure, homodimer. The cofactor is pyridoxal 5'-phosphate.

The protein localises to the cytoplasm. It catalyses the reaction (8S)-8-amino-7-oxononanoate + S-adenosyl-L-methionine = S-adenosyl-4-methylsulfanyl-2-oxobutanoate + (7R,8S)-7,8-diammoniononanoate. It participates in cofactor biosynthesis; biotin biosynthesis; 7,8-diaminononanoate from 8-amino-7-oxononanoate (SAM route): step 1/1. Its function is as follows. Catalyzes the transfer of the alpha-amino group from S-adenosyl-L-methionine (SAM) to 7-keto-8-aminopelargonic acid (KAPA) to form 7,8-diaminopelargonic acid (DAPA). It is the only aminotransferase known to utilize SAM as an amino donor. This Helicobacter pylori (strain ATCC 700392 / 26695) (Campylobacter pylori) protein is Adenosylmethionine-8-amino-7-oxononanoate aminotransferase.